The primary structure comprises 227 residues: Ribonuclease HII (227 aa).

Residues 16–205 (SLLAGVDEVG…VKMALDAVGV (190 aa)) enclose the RNase H type-2 domain. Residues D22, E23, and D114 each coordinate a divalent metal cation.

Belongs to the RNase HII family. The cofactor is Mn(2+). Mg(2+) serves as cofactor.

Its subcellular location is the cytoplasm. It carries out the reaction Endonucleolytic cleavage to 5'-phosphomonoester.. Its function is as follows. Endonuclease that specifically degrades the RNA of RNA-DNA hybrids. This chain is Ribonuclease HII, found in Marinobacter nauticus (strain ATCC 700491 / DSM 11845 / VT8) (Marinobacter aquaeolei).